Consider the following 243-residue polypeptide: Adenosylcobinamide-GDP ribazoletransferase (243 aa).

Transmembrane regions (helical) follow at residues 31–51 (LLFY…FNTL), 55–75 (APLM…SGGL), 109–129 (IAVV…LALI), 133–153 (ASVW…GLFL), and 188–208 (VLLA…CFFW).

It belongs to the CobS family. Mg(2+) serves as cofactor.

It is found in the cell inner membrane. The enzyme catalyses alpha-ribazole + adenosylcob(III)inamide-GDP = adenosylcob(III)alamin + GMP + H(+). It catalyses the reaction alpha-ribazole 5'-phosphate + adenosylcob(III)inamide-GDP = adenosylcob(III)alamin 5'-phosphate + GMP + H(+). It participates in cofactor biosynthesis; adenosylcobalamin biosynthesis; adenosylcobalamin from cob(II)yrinate a,c-diamide: step 7/7. Joins adenosylcobinamide-GDP and alpha-ribazole to generate adenosylcobalamin (Ado-cobalamin). Also synthesizes adenosylcobalamin 5'-phosphate from adenosylcobinamide-GDP and alpha-ribazole 5'-phosphate. This Pseudomonas syringae pv. syringae (strain B728a) protein is Adenosylcobinamide-GDP ribazoletransferase.